A 1515-amino-acid polypeptide reads, in one-letter code: Glutamate synthase [NADPH] large chain (1515 aa).

A propeptide spanning residues 1-36 (MTTELNQGEQFVADFRANAAALTTANAYNPEDEHDA) is cleaved from the precursor. The For GATase activity role is filled by Cys37. Residues 37 to 432 (CGVGFIAAID…PGEMIAVDLQ (396 aa)) enclose the Glutamine amidotransferase type-2 domain. Positions 916–937 (AKSDSGEGGEDPARFRPDKNGD) are disordered. The segment covering 926–936 (DPARFRPDKNG) has biased composition (basic and acidic residues). FMN contacts are provided by residues 1085 to 1142 (LSEV…IMVR) and 1086 to 1142 (SEVH…IMVR). The [3Fe-4S] cluster site is built by Cys1138, Cys1144, and Cys1149.

It belongs to the glutamate synthase family. In terms of assembly, aggregate of 4 catalytic active heterodimers, consisting of a large and a small subunit. It depends on [3Fe-4S] cluster as a cofactor. Requires FAD as cofactor. FMN is required as a cofactor.

The catalysed reaction is 2 L-glutamate + NADP(+) = L-glutamine + 2-oxoglutarate + NADPH + H(+). It participates in amino-acid biosynthesis; L-glutamate biosynthesis via GLT pathway; L-glutamate from 2-oxoglutarate and L-glutamine (NADP(+) route): step 1/1. Its pathway is energy metabolism; nitrogen metabolism. This Azospirillum brasilense protein is Glutamate synthase [NADPH] large chain (gltB).